Consider the following 326-residue polypeptide: tRNA-modifying protein YgfZ (326 aa).

Positions 27 and 189 each coordinate folate.

Belongs to the tRNA-modifying YgfZ family.

It localises to the cytoplasm. In terms of biological role, folate-binding protein involved in regulating the level of ATP-DnaA and in the modification of some tRNAs. It is probably a key factor in regulatory networks that act via tRNA modification, such as initiation of chromosomal replication. The chain is tRNA-modifying protein YgfZ from Escherichia coli (strain SMS-3-5 / SECEC).